We begin with the raw amino-acid sequence, 615 residues long: DNA mismatch repair protein MutL (615 aa).

Residues 363–397 (FAEPAAREPVAPRYSPAPASGSRPAAPWPNAQPGY) are disordered. Residues 364–387 (AEPAAREPVAPRYSPAPASGSRPA) are compositionally biased toward low complexity.

This sequence belongs to the DNA mismatch repair MutL/HexB family.

Its function is as follows. This protein is involved in the repair of mismatches in DNA. It is required for dam-dependent methyl-directed DNA mismatch repair. May act as a 'molecular matchmaker', a protein that promotes the formation of a stable complex between two or more DNA-binding proteins in an ATP-dependent manner without itself being part of a final effector complex. In Shigella flexneri, this protein is DNA mismatch repair protein MutL.